Here is an 85-residue protein sequence, read N- to C-terminus: UPF0386 protein TM1040_0419 (85 aa).

Residues 62–85 form a disordered region; it reads SKSSRPYQISEKGRRSVRAQLDNR.

The protein belongs to the UPF0386 family.

The polypeptide is UPF0386 protein TM1040_0419 (Ruegeria sp. (strain TM1040) (Silicibacter sp.)).